The following is a 367-amino-acid chain: Germination protease (367 aa).

A propeptide spanning residues 1 to 15 is cleaved from the precursor; it reads MKEPLDLSKYSIRTD.

The protein belongs to the peptidase A25 family. As to quaternary structure, homotetramer. In terms of processing, autoproteolytically processed. The inactive tetrameric zymogen termed p46 autoprocesses to a smaller form termed p41, which is active only during spore germination.

The enzyme catalyses Endopeptidase action with P4 Glu or Asp, P1 preferably Glu &gt; Asp, P1' hydrophobic and P2' Ala.. In terms of biological role, initiates the rapid degradation of small, acid-soluble proteins during spore germination. This chain is Germination protease, found in Bacillus cereus (strain B4264).